We begin with the raw amino-acid sequence, 359 residues long: Peptide methionine sulfoxide reductase MsrA/MsrB (359 aa).

The tract at residues 36–189 (RVIYLAGGCF…PGGYCHIDLK (154 aa)) is peptide methionine sulfoxide reductase A. Cysteine 44 is an active-site residue. In terms of domain architecture, MsrB spans 206–329 (DEVLKKKLTK…NSAALRFIPL (124 aa)). The active-site Nucleophile is the cysteine 318.

This sequence in the N-terminal section; belongs to the MsrA Met sulfoxide reductase family. The protein in the C-terminal section; belongs to the MsrB Met sulfoxide reductase family.

The catalysed reaction is L-methionyl-[protein] + [thioredoxin]-disulfide + H2O = L-methionyl-(S)-S-oxide-[protein] + [thioredoxin]-dithiol. The enzyme catalyses [thioredoxin]-disulfide + L-methionine + H2O = L-methionine (S)-S-oxide + [thioredoxin]-dithiol. It carries out the reaction L-methionyl-[protein] + [thioredoxin]-disulfide + H2O = L-methionyl-(R)-S-oxide-[protein] + [thioredoxin]-dithiol. Has an important function as a repair enzyme for proteins that have been inactivated by oxidation. Catalyzes the reversible oxidation-reduction of methionine sulfoxide in proteins to methionine. The sequence is that of Peptide methionine sulfoxide reductase MsrA/MsrB (msrAB) from Helicobacter pylori (strain J99 / ATCC 700824) (Campylobacter pylori J99).